The primary structure comprises 472 residues: E1B 55 kDa protein (472 aa).

The segment at 1-90 (MERPNPSVGG…GQRGEKRKLE (90 aa)) is disordered. Low complexity predominate over residues 32–44 (RLLAGAASARSGS). Residues 45–57 (SAGGGGGGGGGGE) are compositionally biased toward gly residues. 2 positions are modified to phosphoserine: serine 468 and serine 469.

The protein belongs to the adenoviridae E1B 55 kDa protein family. In terms of assembly, interacts with host PML-4 and PML-5; this interaction promotes efficient subnuclear targeting of E1B-55K to PML nuclear bodies. Interacts with E4-ORF3 protein. Interacts with E4-ORF6 protein.

The protein resides in the host nucleus. It localises to the host cytoplasm. In terms of biological role, plays a major role to prevent cellular inhibition of viral genome replication. Assembles an SCF-like E3 ubiquitin ligase complex based on the cellular proteins ELOB, ELOC, CUL5 and RBX1, in cooperation with viral E4orf6. This viral RING-type ligase ubiquitinates cellular substrates and targets them to proteasomal degradation: TP53/p53, LIG4, MRE11-RAD50-NBS1 (MRN) complex, ITGA3, DAXX and BLM. E1B-55K probably acts as the substrate-specific adapter of the SCF-like E3 ubiquitin ligase complex. Degradation of host TP53/p53 activity is essential for preventing E1A-induced TP53 accumulation that would otherwise lead to cell apoptosis and growth arrest. E1B-55K also inactivates TP53 transcription-factor activity by binding its transactivation domain. E1B-55K also functions as a SUMO1 E3 ligase for TP53 which causes the latter to be sequestered in promyelocytic leukemia (PML) nuclear bodies thereby contributing to maximal inhibition of TP53 function. This chain is E1B 55 kDa protein, found in Homo sapiens (Human).